The following is a 957-amino-acid chain: Glycine dehydrogenase (decarboxylating) (957 aa).

An N6-(pyridoxal phosphate)lysine modification is found at Lys-708.

This sequence belongs to the GcvP family. The glycine cleavage system is composed of four proteins: P, T, L and H. It depends on pyridoxal 5'-phosphate as a cofactor.

It carries out the reaction N(6)-[(R)-lipoyl]-L-lysyl-[glycine-cleavage complex H protein] + glycine + H(+) = N(6)-[(R)-S(8)-aminomethyldihydrolipoyl]-L-lysyl-[glycine-cleavage complex H protein] + CO2. Functionally, the glycine cleavage system catalyzes the degradation of glycine. The P protein binds the alpha-amino group of glycine through its pyridoxal phosphate cofactor; CO(2) is released and the remaining methylamine moiety is then transferred to the lipoamide cofactor of the H protein. The chain is Glycine dehydrogenase (decarboxylating) from Salmonella arizonae (strain ATCC BAA-731 / CDC346-86 / RSK2980).